The primary structure comprises 509 residues: MFS transporter fsdG (509 aa).

N-linked (GlcNAc...) asparagine glycosylation is found at Asn-8 and Asn-26. 4 helical membrane passes run Phe-63–Met-83, Ile-103–Pro-123, Ile-139–Ala-159, and Phe-162–Phe-182. Asn-189 carries N-linked (GlcNAc...) asparagine glycosylation. 4 helical membrane passes run Leu-195–Ala-215, Trp-222–Leu-242, Leu-298–Ile-318, and Gly-341–Ile-361. A glycan (N-linked (GlcNAc...) asparagine) is linked at Asn-367. The next 4 helical transmembrane spans lie at Tyr-380–Trp-400, Trp-408–Pro-428, Ala-442–Leu-462, and Gly-474–Phe-494.

Belongs to the major facilitator superfamily.

It is found in the cell membrane. Functionally, efflux pump that might be required for efficient secretion of fusaridione A or other secondary metabolies produced by the fusaridione A gene cluster. The polypeptide is MFS transporter fsdG (Fusarium heterosporum).